The chain runs to 309 residues: Assembly-complementing factor 4 (309 aa).

Disordered regions lie at residues 1–80, 164–240, and 286–309; these read MSED…ASPI, KSIN…ENTP, and VRSE…LFKR. 2 stretches are compositionally biased toward basic and acidic residues: residues 13-24 and 34-44; these read ELHKLSIVDKHS and KQHEVQPESKS. Phosphoserine occurs at positions 44, 71, 74, 78, and 165. The span at 61–80 shows a compositional bias: polar residues; it reads SSPQRSTTNQSPVSDHASPI. 3 stretches are compositionally biased toward low complexity: residues 174-188, 205-214, and 222-239; these read NNNV…LPNR, PSRSSESTPT, and PRNT…GENT. The segment covering 287–298 has biased composition (acidic residues); sequence RSEDEDDEEFEP. Phosphoserine is present on serine 288.

Functionally, may be involved in actin cytoskeleton organization and biogenesis. The polypeptide is Assembly-complementing factor 4 (ACF4) (Saccharomyces cerevisiae (strain ATCC 204508 / S288c) (Baker's yeast)).